A 262-amino-acid chain; its full sequence is Nurim (262 aa).

The Nuclear portion of the chain corresponds to 1–4 (MAPA). A helical transmembrane segment spans residues 5-28 (LLLVPAALASFILAFGTGVEFVRF). The Perinuclear space segment spans residues 29 to 58 (TSLRPLLGGIPESGGPDARQGWLAALQDRS). A helical transmembrane segment spans residues 59–80 (ILAPLAWDLGLLLLFVGQHSLM). At 81–97 (AAERVKAWTSRYFGVLQ) the chain is on the nuclear side. Residues 98-114 (RSLYVACTALALQLVMR) form a helical membrane-spanning segment. Residues 115–133 (YWEPIPKGPVLWEARAEPW) lie on the Perinuclear space side of the membrane. A helical membrane pass occupies residues 134-164 (ATWVPLLCFVLHVISWLLIFSILLVFDYAEL). Residues 165 to 191 (MGLKQVYYHVLGLGEPLALKSPRALRL) lie on the Nuclear side of the membrane. A helical transmembrane segment spans residues 192–210 (FSHLRHPVCVELLTVLWVV). Residues 211 to 216 (PTLGTD) lie on the Perinuclear space side of the membrane. Residues 217-234 (RLLLAFLLTLYLGLAHGL) traverse the membrane as a helical segment. The Nuclear segment spans residues 235–262 (DQQDLRYLRAQLQRKLHLLSRPQDGEAE).

This sequence belongs to the nurim family.

The protein localises to the nucleus inner membrane. This chain is Nurim (NRM), found in Pan troglodytes (Chimpanzee).